The following is a 240-amino-acid chain: Zein-alpha 19C2 (240 aa).

A signal peptide spans 1–21 (MATKIFSLLMLLALSTCVANA).

It belongs to the zein family. In terms of assembly, interacts with OP10 (via N-terminus).

Zeins are major seed storage proteins. The sequence is that of Zein-alpha 19C2 from Zea mays (Maize).